A 324-amino-acid chain; its full sequence is Cyclic GMP-AMP synthase CdnE03 (324 aa).

Positions 87 and 89 each coordinate Mg(2+). ATP contacts are provided by residues Asp89, Asn144–Lys145, and Asp159. Asp159 provides a ligand contact to Mg(2+). Residues Lys224 and Ser243 each coordinate GTP.

Belongs to the CD-NTase family. E03 subfamily. Requires Mg(2+) as cofactor.

It carries out the reaction GTP + ATP = 3',2'-cGAMP + 2 diphosphate. With respect to regulation, activated by a virus-derived, approximately 400 nucleotide RNA (called CBASS-activating bacteriophage RNA, cabRNA) that begins in the viral terminase subunit terS and extends into terL. RNA secondary and/or tertiary structure, as well as viral infection itself, are important for CdnE activation. A much longer RNA (escaper RNA) with a different secondary structure, derived from a terS-mutated virus still binds to this protein, but does not activate its nucleotide cyclase activity. Shorter viral-derived RNAs (34 and 49 nt) with extensive predicted secondary structure also activate the enzyme, although not as well as full-length cabRNA. Functionally, cyclic nucleotide synthase (second messenger synthase) of a CBASS antivirus system. CBASS (cyclic oligonucleotide-based antiphage signaling system) provides immunity against bacteriophage. The CD-NTase protein synthesizes cyclic nucleotides in response to infection; these serve as specific second messenger signals. The signals activate a diverse range of effectors, leading to bacterial cell death and thus abortive phage infection. The effector for this system is downstream Cap15. A type I-B CBASS system. Its function is as follows. Cyclic dinucleotide synthase that catalyzes the synthesis of 3',2'-cyclic GMP-AMP (cGAMP) from GTP and ATP upon activation by viral-derived cabRNA. Binds cabRNA via positive charges in its N-terminus. Protects S.aureus against phage infection. When the CBASS operon (cdnE-cap15) is introduced in S.aureus strain RN4220 there is strong protection against lytic DNA phages 80alpha-vir and phi-NM1-gamma-6 but little to no protection against phages phi-NM4-gamma-4 or phi-12-gamma-3. This chain is Cyclic GMP-AMP synthase CdnE03, found in Staphylococcus schleiferi.